The sequence spans 461 residues: Bifunctional protein GlmU (461 aa).

The pyrophosphorylase stretch occupies residues 1 to 232; the sequence is MNLQIIILAA…SFEVQGINNR (232 aa). Residues 8–11, Lys-22, Gln-73, and 78–79 contribute to the UDP-N-acetyl-alpha-D-glucosamine site; these read LAAG and GT. Asp-102 contacts Mg(2+). Residues Gly-142, Glu-157, and Asn-230 each contribute to the UDP-N-acetyl-alpha-D-glucosamine site. Position 230 (Asn-230) interacts with Mg(2+). Positions 233–253 are linker; it reads QQLQQLERIWQQRAANQLMEK. The N-acetyltransferase stretch occupies residues 254-461; that stretch reads GATLADANRF…WKRPVKRERD (208 aa). UDP-N-acetyl-alpha-D-glucosamine is bound by residues Arg-336 and Lys-354. The active-site Proton acceptor is the His-366. UDP-N-acetyl-alpha-D-glucosamine is bound by residues Tyr-369 and Asn-380. Acetyl-CoA contacts are provided by residues Ala-383, 389-390, Ser-408, and Ala-426; that span reads NY.

This sequence in the N-terminal section; belongs to the N-acetylglucosamine-1-phosphate uridyltransferase family. The protein in the C-terminal section; belongs to the transferase hexapeptide repeat family. Homotrimer. It depends on Mg(2+) as a cofactor.

It localises to the cytoplasm. The enzyme catalyses alpha-D-glucosamine 1-phosphate + acetyl-CoA = N-acetyl-alpha-D-glucosamine 1-phosphate + CoA + H(+). The catalysed reaction is N-acetyl-alpha-D-glucosamine 1-phosphate + UTP + H(+) = UDP-N-acetyl-alpha-D-glucosamine + diphosphate. It participates in nucleotide-sugar biosynthesis; UDP-N-acetyl-alpha-D-glucosamine biosynthesis; N-acetyl-alpha-D-glucosamine 1-phosphate from alpha-D-glucosamine 6-phosphate (route II): step 2/2. The protein operates within nucleotide-sugar biosynthesis; UDP-N-acetyl-alpha-D-glucosamine biosynthesis; UDP-N-acetyl-alpha-D-glucosamine from N-acetyl-alpha-D-glucosamine 1-phosphate: step 1/1. It functions in the pathway bacterial outer membrane biogenesis; LPS lipid A biosynthesis. Functionally, catalyzes the last two sequential reactions in the de novo biosynthetic pathway for UDP-N-acetylglucosamine (UDP-GlcNAc). The C-terminal domain catalyzes the transfer of acetyl group from acetyl coenzyme A to glucosamine-1-phosphate (GlcN-1-P) to produce N-acetylglucosamine-1-phosphate (GlcNAc-1-P), which is converted into UDP-GlcNAc by the transfer of uridine 5-monophosphate (from uridine 5-triphosphate), a reaction catalyzed by the N-terminal domain. The polypeptide is Bifunctional protein GlmU (Legionella pneumophila (strain Corby)).